We begin with the raw amino-acid sequence, 531 residues long: Peptide chain release factor 3 (531 aa).

Residues 13-282 form the tr-type G domain; sequence AKRRTFAIIS…TLIKYAPPPK (270 aa). GTP is bound by residues 22–29, 90–94, and 144–147; these read SHPDAGKT, DTPGH, and NKLD.

It belongs to the TRAFAC class translation factor GTPase superfamily. Classic translation factor GTPase family. PrfC subfamily.

The protein resides in the cytoplasm. Its function is as follows. Increases the formation of ribosomal termination complexes and stimulates activities of RF-1 and RF-2. It binds guanine nucleotides and has strong preference for UGA stop codons. It may interact directly with the ribosome. The stimulation of RF-1 and RF-2 is significantly reduced by GTP and GDP, but not by GMP. The protein is Peptide chain release factor 3 of Psychrobacter cryohalolentis (strain ATCC BAA-1226 / DSM 17306 / VKM B-2378 / K5).